The chain runs to 427 residues: Homoserine O-acetyltransferase FUB5 (427 aa).

Positions 1–13 are enriched in low complexity; the sequence is MTTTTTAPALPTP. Positions 1 to 35 are disordered; the sequence is MTTTTTAPALPTPIHDGLGNGTTYERSIPRPVNPF. The AB hydrolase-1 domain occupies 77–400; it reads NVMIICHALS…VSDDGHDAFL (324 aa). Residue Ser175 is the Nucleophile of the active site. Residues 260-297 form a disordered region; the sequence is RFGRDTGNKKKAKNKGSETLPSNSTPIHSQGGADETPV. Polar residues predominate over residues 276–287; the sequence is SETLPSNSTPIH. Residues Asp367 and His396 contribute to the active site.

This sequence belongs to the AB hydrolase superfamily. MetX family.

It catalyses the reaction L-homoserine + acetyl-CoA = O-acetyl-L-homoserine + CoA. It functions in the pathway mycotoxin biosynthesis. Its function is as follows. Homoserine O-acetyltransferase; part of the gene cluster that mediates the biosynthesis of fusaric acid, a mycotoxin with low to moderate toxicity to animals and humans, but with high phytotoxic properties. L-aspartate is suggested as fusaric acid amino acid precursor that is activated and further processed to O-acetyl-L-homoserine by cluster enzymes aspartate kinase FUB3 and homoserine O-acetyltransferase FUB5, as well as enzymes of the primary metabolism. The polyketide synthase (PKS) FUB1 generates the triketide trans-2-hexenal which is presumptively released by the hydrolase FUB4 and linked to the NRPS-bound amino acid precursor by NAD(P)-dependent dehydrogenase FUB6. FUB1, FUB4, and the non-canonical NRPS Fub8 may form an enzyme complex. Further processing of the NRPS-bound intermediate might be carried out by FUB6 and the sulfhydrylase FUB7, enabling a spontaneous electrocyclization to close the carbon backbone of fusaric acid. Dihydrofusaric acid is likely to be released via reduction by the thioester reductase (TR) domain of FUB8 whereupon the final oxidation to fusaric acid may (also) be performed by the FMN-dependent dehydrogenase FUB9. The protein is Homoserine O-acetyltransferase FUB5 of Gibberella fujikuroi (strain CBS 195.34 / IMI 58289 / NRRL A-6831) (Bakanae and foot rot disease fungus).